The primary structure comprises 4857 residues: Dual E2 ubiquitin-conjugating enzyme/E3 ubiquitin-protein ligase BIRC6 (4857 aa).

WD repeat units lie at residues 68-106 and 107-136; these read DGLHSLSYHPALNAILAVTSRGTIKVIDGTSGATLQASA and LSAKPGGQVKCQYISAVDKVIFVDDYAVGC. A BIR repeat occupies 268-377; sequence PELGVGPGRS…LSVTLATSPA (110 aa). The Zn(2+) site is built by cysteine 328, cysteine 331, histidine 348, and cysteine 355. The stretch at 379-426 is one WD 3 repeat; that stretch reads FPCTDGTDRISCFGSGSCPHFLAAATKRGKICIWDVSKLMKVHLKFEI. Disordered stretches follow at residues 465 to 498 and 579 to 618; these read DIPKLEGDSDDLLEDSDSEEHSRSDSVTGHTSQK and ATSPISSNSHRSLDGLSRTQGESISEQGSTDNESCTNSEL. The segment covering 472-482 has biased composition (acidic residues); the sequence is DSDDLLEDSDS. 5 positions are modified to phosphoserine: serine 473, serine 480, serine 482, serine 581, and serine 590. WD repeat units follow at residues 501 to 720, 730 to 850, 851 to 927, and 928 to 966; these read MEVS…VQCL, NLCI…QHIK, DPQD…AKVE, and PPKKEGTEEQDTFVSVIYCSGTDRLCACTKGGELHFLQI. The span at 579–588 shows a compositional bias: polar residues; it reads ATSPISSNSH. Residues 595–618 show a composition bias toward polar residues; it reads SRTQGESISEQGSTDNESCTNSEL. 2 disordered regions span residues 984 to 1004 and 1053 to 1073; these read LSKGIEPSSEGSKPLSNPSSP and QQQRRHPQHLHQQHHGDAAQH. The span at 992-1004 shows a compositional bias: polar residues; that stretch reads SEGSKPLSNPSSP. Over residues 1056–1065 the composition is skewed to basic residues; that stretch reads RRHPQHLHQQ. Threonine 1710 carries the post-translational modification Phosphothreonine. 2 positions are modified to phosphoserine: serine 2222 and serine 2955. Residues 2945-2973 are disordered; sequence SVTTNTTDSVSDEEKVSGGKDGNGSSTSV. The segment at 3189–3193 is HRRAR loop; important for DIABLO/SMAC and HTRA2 binding; it reads HRRAR. One can recognise a Ubiquitin-like domain in the interval 3819-4068; that stretch reads DEKVTMFLQS…ESLLETCPIQ (250 aa). The disordered stretch occupies residues 3923-3949; it reads QSKRAVSATPPRPPSRRGRTIPDKIGS. Residue threonine 3931 is modified to Phosphothreonine. Position 4023 is a phosphoserine (serine 4023). The tract at residues 4260–4283 is disordered; sequence RVPNSSVNQTEPQVSSSHNPTSTE. The segment covering 4261-4283 has biased composition (polar residues); that stretch reads VPNSSVNQTEPQVSSSHNPTSTE. The UBC core domain maps to 4573–4740; sequence ARARRLAQEA…IRQATVKWAM (168 aa). Cysteine 4666 acts as the Glycyl thioester intermediate in catalysis. Residues 4835–4857 form a disordered region; it reads EETLMHDQVKPSSSKELPSDFQL. Positions 4844-4857 are enriched in polar residues; it reads KPSSSKELPSDFQL.

Belongs to the BIRC6 family. As to quaternary structure, homodimer; antiparallel. Interacts with RNF41. Interacts with DIABLO/SMAC, likely with higher affinity to SMAC dimer than SMAC monomer; this interaction blocks the substrate-binding site and inhibits the caspase inhibition activity of BIRC6. Interacts with KIF23/MKLP1, USP8/UBPY, BIRC5/survivin, MAP2K1/MEK1, RAB8A/RAB8, RAB11A/RAB11, PLK1, EXOC3/SEC6 and EXOC4/SEC8. In terms of processing, ubiquitinated; mediated by RNF41 E3 ligase and leads to proteasomal degradation, impairing inhibition of apoptosis. Deubiquitinated by USP8/UBPY. Autoubiquitinated; mediated by E1 ubiquitin activating enzyme UBA6. Proteolytically cleaved. Acts as substrate for CASP3, CASP6, CASP7, CASP9 and HTRA2. As to expression, expressed in brain cancer cells.

It is found in the golgi apparatus. It localises to the trans-Golgi network membrane. The protein resides in the endosome. Its subcellular location is the cytoplasm. The protein localises to the cytoskeleton. It is found in the spindle pole. It localises to the microtubule organizing center. The protein resides in the centrosome. Its subcellular location is the midbody. The protein localises to the midbody ring. It carries out the reaction S-ubiquitinyl-[E1 ubiquitin-activating enzyme]-L-cysteine + [acceptor protein]-L-lysine = [E1 ubiquitin-activating enzyme]-L-cysteine + N(6)-monoubiquitinyl-[acceptor protein]-L-lysine.. With respect to regulation, inhibited by DIABLO/SMAC, which competes for the substrate-binding sites on BIRC6. BIRC6 inhibits caspases and protease by ubiquitination but BIRC6 itself is subjected to protease cleavage by CASP3, CASP6, CASP7, CASP9 and HTRA2 by protease cleavage. Functionally, anti-apoptotic protein known as inhibitor of apoptosis (IAP) which can regulate cell death by controlling caspases and by acting as an E3 ubiquitin-protein ligase. Unlike most IAPs, does not contain a RING domain and it is not a RING-type E3 ligase. Instead acts as a dual E2/E3 enzyme that combines ubiquitin conjugating (E2) and ubiquitin ligase (E3) activities in a single polypeptide. Ubiquitination is mediated by a non-canonical E1 ubiquitin activating enzyme UBA6. Ubiquitinates CASP3, CASP7 and CASP9 and inhibits their caspase activity; also ubiquitinates their procaspases but to a weaker extent. Ubiquitinates pro-apoptotic factors DIABLO/SMAC and HTRA2. DIABLO/SMAC antagonizes the caspase inhibition activity of BIRC6 by competing for the same binding sites as the caspases. Ubiquitinates the autophagy protein MAP1LC3B; this activity is also inhibited by DIABLO/SMAC. Important regulator for the final stages of cytokinesis. Crucial for normal vesicle targeting to the site of abscission, but also for the integrity of the midbody and the midbody ring, and its striking ubiquitin modification. The sequence is that of Dual E2 ubiquitin-conjugating enzyme/E3 ubiquitin-protein ligase BIRC6 (BIRC6) from Homo sapiens (Human).